Consider the following 1308-residue polypeptide: Cilia- and flagella-associated protein 57 C (1308 aa).

WD repeat units follow at residues 57–99 (NEYR…RRKN), 110–154 (YNIK…KCLG), 415–454 (NHTG…IKIS), 504–546 (SPFK…NPSQ), 551–590 (GHTG…QHQQ), 645–689 (LLDI…GKFT), and 694–733 (HDER…ARGM). Residues 779–1000 (LNSRDDRIRQ…RDKIDGQKKI (222 aa)) are a coiled coil.

The protein belongs to the CFAP57 family. Forms a heterodimer with CFAP57A. Associates with components of the nexin-dynein regulatory complex (N-DRC) and the CFAP184:CFAP263 complex.

The protein resides in the cell projection. It is found in the cilium. Associates with components of the nexin-dynein regulatory complex (N-DRC), a key regulator of ciliary/flagellar motility, and might act as an inner dynein arm (IDA) hub or linkage. The chain is Cilia- and flagella-associated protein 57 C (CFAP57C) from Tetrahymena thermophila (strain SB210).